The chain runs to 122 residues: Large ribosomal subunit protein uL18 (122 aa).

It belongs to the universal ribosomal protein uL18 family. In terms of assembly, part of the 50S ribosomal subunit; part of the 5S rRNA/L5/L18/L25 subcomplex. Contacts the 5S and 23S rRNAs.

In terms of biological role, this is one of the proteins that bind and probably mediate the attachment of the 5S RNA into the large ribosomal subunit, where it forms part of the central protuberance. This is Large ribosomal subunit protein uL18 from Leptospira biflexa serovar Patoc (strain Patoc 1 / Ames).